The sequence spans 276 residues: 3-methyl-2-oxobutanoate hydroxymethyltransferase (276 aa).

The Mg(2+) site is built by Asp44 and Asp83. 3-methyl-2-oxobutanoate is bound by residues 44–45, Asp83, and Lys113; that span reads DS. Glu115 is a Mg(2+) binding site. Glu182 (proton acceptor) is an active-site residue.

This sequence belongs to the PanB family. As to quaternary structure, homodecamer; pentamer of dimers. Mg(2+) is required as a cofactor.

It is found in the cytoplasm. The catalysed reaction is 3-methyl-2-oxobutanoate + (6R)-5,10-methylene-5,6,7,8-tetrahydrofolate + H2O = 2-dehydropantoate + (6S)-5,6,7,8-tetrahydrofolate. Its pathway is cofactor biosynthesis; (R)-pantothenate biosynthesis; (R)-pantoate from 3-methyl-2-oxobutanoate: step 1/2. Its function is as follows. Catalyzes the reversible reaction in which hydroxymethyl group from 5,10-methylenetetrahydrofolate is transferred onto alpha-ketoisovalerate to form ketopantoate. This is 3-methyl-2-oxobutanoate hydroxymethyltransferase from Clostridium acetobutylicum (strain ATCC 824 / DSM 792 / JCM 1419 / IAM 19013 / LMG 5710 / NBRC 13948 / NRRL B-527 / VKM B-1787 / 2291 / W).